Reading from the N-terminus, the 160-residue chain is Transcriptional repressor NrdR (160 aa).

Residues 3-34 fold into a zinc finger; sequence CPYCQYEDTQVKDSRPSEEGTVIRRRRICSVC. One can recognise an ATP-cone domain in the interval 49 to 139; sequence LLVLKKSGRY…VYRDFRNASD (91 aa).

It belongs to the NrdR family. Requires Zn(2+) as cofactor.

Functionally, negatively regulates transcription of bacterial ribonucleotide reductase nrd genes and operons by binding to NrdR-boxes. This chain is Transcriptional repressor NrdR, found in Bartonella henselae (strain ATCC 49882 / DSM 28221 / CCUG 30454 / Houston 1) (Rochalimaea henselae).